The chain runs to 84 residues: Dolichol phosphate-mannose biosynthesis regulatory protein (84 aa).

A run of 2 helical transmembrane segments spans residues Leu-11 to Leu-31 and Tyr-49 to Ile-69.

This sequence belongs to the DPM2 family. Component of the dolichol-phosphate mannose (DPM) synthase complex composed of DPM1, DPM2 and DPM3; in the complex interacts directly with DPM3. Component of the glycosylphosphatidylinositol-N-acetylglucosaminyltransferase (GPI-GnT) complex composed at least by PIGA, PIGC, PIGH, PIGP, PIGQ, PIGY and DPM2. Interacts with PIGA, PIGC and PIGQ.

The protein localises to the endoplasmic reticulum membrane. It participates in protein modification; protein glycosylation. In terms of biological role, regulates the biosynthesis of dolichol phosphate-mannose. Regulatory subunit of the dolichol-phosphate mannose (DPM) synthase complex; essential for the ER localization and stable expression of DPM1. Part of the glycosylphosphatidylinositol-N-acetylglucosaminyltransferase (GPI-GnT) complex that catalyzes the transfer of N-acetylglucosamine from UDP-N-acetylglucosamine to phosphatidylinositol and participates in the first step of GPI biosynthesis. May act by regulating the GPI-GNT complex. This Bos taurus (Bovine) protein is Dolichol phosphate-mannose biosynthesis regulatory protein.